The following is a 405-amino-acid chain: Homocitrate synthase AksA (405 aa).

Residues 23-274 (IEICDVTLRD…IERYDTTKLT (252 aa)) enclose the Pyruvate carboxyltransferase domain.

This sequence belongs to the alpha-IPM synthase/homocitrate synthase family.

The enzyme catalyses acetyl-CoA + 2-oxoglutarate + H2O = (2R)-homocitrate + CoA + H(+). It catalyses the reaction 2-oxoadipate + acetyl-CoA + H2O = (R)-dihomocitrate + CoA + H(+). It carries out the reaction 2-oxoheptanedioate + acetyl-CoA + H2O = (R)-trihomocitrate + CoA + H(+). Its pathway is organic acid metabolism; 2-oxosuberate biosynthesis. Catalyzes the condensation of alpha-ketoglutarate and acetyl-CoA to form (R)-homocitrate. Can also catalyze the condensation of alpha-ketoadipate with acetyl-CoA to form (R)-homo(2)citrate, and the condensation of alpha-ketopimelate with acetyl-CoA to form (R)-homo(3)citrate. These reactions are part of the biosynthesis pathway of coenzyme B and biotin. This is Homocitrate synthase AksA (aksA) from Methanosarcina acetivorans (strain ATCC 35395 / DSM 2834 / JCM 12185 / C2A).